A 126-amino-acid chain; its full sequence is LWamide neuropeptides (126 aa).

The propeptide at 1 to 2 (KR) is 1. The tract at residues 1-126 (KRQQPGLWGR…KSAIPKAKPQ (126 aa)) is disordered. At Trp-8 the chain carries Tryptophan amide. The propeptide at 11-15 (SADPQ) is 2. A tryptophan amide mark is found at Trp-20 and Trp-29. Positions 32 to 36 (SADPQ) are cleaved as a propeptide — 2. 2 positions are modified to tryptophan amide: Trp-41 and Trp-50. Positions 53–57 (SADPQ) are cleaved as a propeptide — 2. 2 positions are modified to tryptophan amide: Trp-62 and Trp-71. Positions 74 to 78 (SADPQ) are cleaved as a propeptide — 2. Trp-83 is modified (tryptophan amide). The propeptide at 86–93 (SAGSGKRQ) is 3. The residue at position 99 (Trp-99) is a Tryptophan amide. Residues 102–126 (SAEPPQYKELEDLKQKSAIPKAKPQ) constitute a propeptide, 4. Basic and acidic residues predominate over residues 107 to 116 (QYKELEDLKQ).

It belongs to the LWamide neuropeptide family.

The protein localises to the secreted. Functionally, metamorphosin A may be part of an internal signaling system involved in control of metamorphosis. This Anemonia sulcata (Mediterranean snakelocks sea anemone) protein is LWamide neuropeptides.